The chain runs to 117 residues: NADH-ubiquinone oxidoreductase chain 3 (117 aa).

3 helical membrane passes run 1 to 21, 57 to 77, and 86 to 106; these read MLMLSIMATIIFIITIVVMML, FFLIAIIFLIFDVEIALLLPM, and LMNWTMTSFFFIFILLIGLYH.

The protein belongs to the complex I subunit 3 family.

It localises to the mitochondrion membrane. It carries out the reaction a ubiquinone + NADH + 5 H(+)(in) = a ubiquinol + NAD(+) + 4 H(+)(out). Functionally, core subunit of the mitochondrial membrane respiratory chain NADH dehydrogenase (Complex I) that is believed to belong to the minimal assembly required for catalysis. Complex I functions in the transfer of electrons from NADH to the respiratory chain. The immediate electron acceptor for the enzyme is believed to be ubiquinone. The chain is NADH-ubiquinone oxidoreductase chain 3 (ND3) from Anopheles quadrimaculatus (Common malaria mosquito).